The chain runs to 200 residues: Recombination protein RecR (200 aa).

The C4-type zinc-finger motif lies at 59 to 74 (CSTCGSLDTQDPCAIC). Positions 82-177 (SLICVVEEVG…TVSMLARGVP (96 aa)) constitute a Toprim domain.

It belongs to the RecR family.

Functionally, may play a role in DNA repair. It seems to be involved in an RecBC-independent recombinational process of DNA repair. It may act with RecF and RecO. The chain is Recombination protein RecR from Phenylobacterium zucineum (strain HLK1).